The following is a 302-amino-acid chain: Nucleotide-binding protein SE_0548 (302 aa).

Position 18–25 (Gly18–Ser25) interacts with ATP. Asp69–Gly72 lines the GTP pocket.

The protein belongs to the RapZ-like family.

Displays ATPase and GTPase activities. The protein is Nucleotide-binding protein SE_0548 of Staphylococcus epidermidis (strain ATCC 12228 / FDA PCI 1200).